The chain runs to 368 residues: tRNA-specific 2-thiouridylase MnmA (368 aa).

ATP-binding positions include 11 to 18 (GMSGGVDS) and methionine 37. Residues 97–99 (NPD) form an interaction with target base in tRNA region. The active-site Nucleophile is cysteine 102. A disulfide bond links cysteine 102 and cysteine 199. Glycine 127 is a binding site for ATP. The segment at 149–151 (KDQ) is interaction with tRNA. Cysteine 199 serves as the catalytic Cysteine persulfide intermediate. The interaction with tRNA stretch occupies residues 311–312 (RY).

It belongs to the MnmA/TRMU family. Interacts with TusE.

The protein resides in the cytoplasm. It catalyses the reaction S-sulfanyl-L-cysteinyl-[protein] + uridine(34) in tRNA + AH2 + ATP = 2-thiouridine(34) in tRNA + L-cysteinyl-[protein] + A + AMP + diphosphate + H(+). Functionally, catalyzes the 2-thiolation of uridine at the wobble position (U34) of tRNA(Lys), tRNA(Glu) and tRNA(Gln), leading to the formation of s(2)U34, the first step of tRNA-mnm(5)s(2)U34 synthesis. Sulfur is provided by IscS, via a sulfur-relay system. Binds ATP and its substrate tRNAs. This is tRNA-specific 2-thiouridylase MnmA from Escherichia coli (strain SMS-3-5 / SECEC).